We begin with the raw amino-acid sequence, 102 residues long: RNA-binding protein Hfq (102 aa).

One can recognise a Sm domain in the interval 9–68 (DPFLNALRRERVPVSIYLVNGIKLQGQIESFDQFVILLKNTVSQMVYKHAISTVVPSRPV). The interval 63–102 (VPSRPVSHHSNNAGGGTSSNYHHGSSAQNTSAQQDSEETE) is disordered. The segment covering 70 to 96 (HHSNNAGGGTSSNYHHGSSAQNTSAQQ) has biased composition (polar residues).

The protein belongs to the Hfq family. Homohexamer.

Functionally, RNA chaperone that binds small regulatory RNA (sRNAs) and mRNAs to facilitate mRNA translational regulation in response to envelope stress, environmental stress and changes in metabolite concentrations. Also binds with high specificity to tRNAs. The chain is RNA-binding protein Hfq from Escherichia fergusonii (strain ATCC 35469 / DSM 13698 / CCUG 18766 / IAM 14443 / JCM 21226 / LMG 7866 / NBRC 102419 / NCTC 12128 / CDC 0568-73).